Reading from the N-terminus, the 351-residue chain is D-alanine--D-alanine ligase (351 aa).

The region spanning 135–343 is the ATP-grasp domain; sequence NQIFLQSGQK…MEEVFADLIE (209 aa). Residue 167-222 coordinates ATP; it reads LMSLGFPQFLKPVEGGSSVSTYKITNQEQLSRQLALIFESDSKVMSQSFLAGTEVS. Mg(2+) is bound by residues D298, E310, and N312.

It belongs to the D-alanine--D-alanine ligase family. Mg(2+) serves as cofactor. Mn(2+) is required as a cofactor.

The protein localises to the cytoplasm. It catalyses the reaction 2 D-alanine + ATP = D-alanyl-D-alanine + ADP + phosphate + H(+). It participates in cell wall biogenesis; peptidoglycan biosynthesis. In terms of biological role, cell wall formation. This chain is D-alanine--D-alanine ligase, found in Leptospira borgpetersenii serovar Hardjo-bovis (strain JB197).